Here is a 213-residue protein sequence, read N- to C-terminus: Large ribosomal subunit protein uL3 (213 aa).

Residues K124 to P151 are disordered.

It belongs to the universal ribosomal protein uL3 family. Part of the 50S ribosomal subunit. Forms a cluster with proteins L14 and L19.

In terms of biological role, one of the primary rRNA binding proteins, it binds directly near the 3'-end of the 23S rRNA, where it nucleates assembly of the 50S subunit. The chain is Large ribosomal subunit protein uL3 from Geobacillus kaustophilus (strain HTA426).